Consider the following 247-residue polypeptide: ATP synthase subunit a 1 (247 aa).

6 consecutive transmembrane segments (helical) span residues 32-52 (YMLL…RALV), 82-102 (FFPL…VGII), 112-132 (IIVT…YGFY), 141-161 (LFVP…IEII), 181-201 (GHVT…LGFV), and 206-226 (ALLP…VAFL).

It belongs to the ATPase A chain family. In terms of assembly, F-type ATPases have 2 components, CF(1) - the catalytic core - and CF(0) - the membrane proton channel. CF(1) has five subunits: alpha(3), beta(3), gamma(1), delta(1), epsilon(1). CF(0) has four main subunits: a, b, b' and c.

Its subcellular location is the cell inner membrane. In terms of biological role, key component of the proton channel; it plays a direct role in the translocation of protons across the membrane. The sequence is that of ATP synthase subunit a 1 from Bradyrhizobium sp. (strain BTAi1 / ATCC BAA-1182).